The following is a 38-amino-acid chain: Kappa-actitoxin-Bcs3a (38 aa).

Residues 2–37 (CIDRFPTGTCKHVKKGGSCKNSQKYRINCAKTCGLC) enclose the ShKT domain. Intrachain disulfides connect C2–C37, C11–C30, and C20–C34. The tract at residues 25–26 (KY) is crucial for binding to potassium channels.

Belongs to the sea anemone type 1 potassium channel toxin family. Type 1b subfamily.

It localises to the secreted. Its subcellular location is the nematocyst. Inhibits voltage-gated potassium channels (IC(50)=405.0 nM for rKCNA1/Kv1.1, IC(50)=0.03 nM for rKCNA2/Kv1.2, IC(50)=1.31 nM for rKCNA6/Kv1.6, IC(50)=74.11 nM for hKCNA3/Kv1.3, and IC(50)=247.69 nM for insect Shaker IR). Binds the Shaker IR channels in a voltage-independent manner. The sequence is that of Kappa-actitoxin-Bcs3a from Bunodosoma caissarum (Sea anemone).